The sequence spans 103 residues: Cell division protein CrgA (103 aa).

The next 2 membrane-spanning stretches (helical) occupy residues 49–69 (FVPL…VYYL) and 80–100 (IGAW…LMTM).

Belongs to the CrgA family.

Its subcellular location is the cell membrane. Involved in cell division. In Bifidobacterium longum (strain NCC 2705), this protein is Cell division protein CrgA.